Reading from the N-terminus, the 341-residue chain is MFRSMLVRSSASAKQAVIRRSFSSGSVPERKVAILGAAGGIGQPLALLMKLNPLVSSLSLYDIANTPGVAADVGHINTRSEVVGYMGDDNLAKALEGADLVIIPAGVPRKPGMTRDDLFNINAGIVKNLCTAIAKYCPHALINMISNPVNSTVPIAAEIFKKAGMYDEKKLFGVTTLDVVRARTFYAGKANVPVAEVNVPVIGGHAGVTILPLFSQATPQANLSSDILTALTKRTQDGGTEVVEAKAGKGSATLSMAYAGALFADACLKGLNGVPDVIECSYVQSTITELPFFASKVRLGKNGVEEVLDLGPLSDFEKEGLEALKPELKSSIEKGVKFANQ.

The N-terminal 22 residues, 1-22, are a transit peptide targeting the mitochondrion; sequence MFRSMLVRSSASAKQAVIRRSF. NAD(+) is bound by residues 36-42 and Asp-62; that span reads GAAGGIG. Positions 109 and 115 each coordinate substrate. Residues Asn-122 and 145 to 147 contribute to the NAD(+) site; that span reads ISN. Positions 147 and 181 each coordinate substrate. Residue His-205 is the Proton acceptor of the active site. Position 256 (Met-256) interacts with NAD(+).

The protein belongs to the LDH/MDH superfamily. MDH type 1 family. As to quaternary structure, homodimer. Forms intramolecular disulfide bonds. In terms of tissue distribution, expressed in rosette leaves.

Its subcellular location is the mitochondrion matrix. It carries out the reaction (S)-malate + NAD(+) = oxaloacetate + NADH + H(+). Its activity is regulated as follows. Negatively regulated by ATP. Not redox-regulated. The formation of intramolecular disulfide bonds does not alter enzymatic activity. Catalyzes a reversible NAD-dependent dehydrogenase reaction involved in central metabolism and redox homeostasis between organelle compartments. Required for carbon dioxide and energy partitioning in leaves. May limit photorespiration during the dark phase. Its activity is essential to shuttle reductants out from the mitochondria to support the photorespiratory flux. Can convert 2-oxoglutarate to (S)-2-hydroxyglutarate in vitro. This is Malate dehydrogenase 1, mitochondrial from Arabidopsis thaliana (Mouse-ear cress).